The primary structure comprises 346 residues: STE20-related kinase adapter protein stlk (346 aa).

The Protein kinase domain maps to 10-298 (YKLLEILKNG…ASKLMTHSFL (289 aa)). Residues 16–24 (LKNGMIGTV) and Lys-38 contribute to the ATP site.

The protein belongs to the protein kinase superfamily. STE Ser/Thr protein kinase family. STE20 subfamily.

This chain is STE20-related kinase adapter protein stlk, found in Drosophila melanogaster (Fruit fly).